We begin with the raw amino-acid sequence, 183 residues long: Putative lipoprotein LpqE (183 aa).

Residues 1 to 30 form the signal peptide; that stretch reads MSRFKISLPALATRVAVLGFLTLMASVLGG. C31 is lipidated: N-palmitoyl cysteine. A lipid anchor (S-diacylglycerol cysteine) is attached at C31.

It localises to the cell membrane. The protein is Putative lipoprotein LpqE (lpqE) of Mycobacterium leprae (strain TN).